Here is a 1690-residue protein sequence, read N- to C-terminus: rRNA biogenesis protein rrp5 (1690 aa).

Disordered regions lie at residues 1–42 (MAGN…GASS) and 59–90 (FMES…ELDN). Residues 11-32 (ASEGSDSQGNERISSLSANEAT) show a composition bias toward polar residues. The span at 72–83 (KTRPKKKGSKKS) shows a compositional bias: basic residues. S1 motif domains are found at residues 109-209 (GSLI…LSLK), 226-289 (GSMI…LTAT), 306-376 (GDYI…VSFL), 398-473 (GFIV…LSFQ), 490-559 (GQFV…LTLK), 579-648 (GTQT…VGCR), 666-739 (GSVL…LSLK), 761-830 (GIKY…MSFK), 866-942 (GKIT…ISHR), 973-1044 (GDEV…IGPL), 1053-1122 (GSRL…LSAR), 1147-1216 (GDIC…MSLK), and 1236-1307 (GSNL…LGLK). Residues 1313–1424 (SDSDISMSDN…EEKDLDEIPS (112 aa)) form a disordered region. 3 stretches are compositionally biased toward acidic residues: residues 1348–1367 (QSEE…EEEP), 1390–1400 (DTEDSEDEEDE), and 1412–1421 (FDDEEKDLDE). Residue Thr1391 is modified to Phosphothreonine. Ser1394 is subject to Phosphoserine. 3 HAT repeats span residues 1420 to 1452 (DEIP…YHLN), 1526 to 1558 (GKVD…FLLN), and 1596 to 1628 (GDPE…MEMK). A phosphoserine mark is found at Ser1684 and Ser1686.

In terms of assembly, component of the ribosomal small subunit (SSU) processome.

It is found in the nucleus. It localises to the nucleolus. Functionally, involved in the biogenesis of rRNA. Required for the formation of 18S and 5.8S rRNA. The protein is rRNA biogenesis protein rrp5 of Schizosaccharomyces pombe (strain 972 / ATCC 24843) (Fission yeast).